We begin with the raw amino-acid sequence, 193 residues long: NAD(P)H-quinone oxidoreductase subunit J (193 aa).

A disordered region spans residues 1-21 (MSDSAPTNPTPTNPAPEESAS).

The protein belongs to the complex I 30 kDa subunit family. As to quaternary structure, NDH-1 can be composed of about 15 different subunits; different subcomplexes with different compositions have been identified which probably have different functions.

The protein localises to the cellular thylakoid membrane. The catalysed reaction is a plastoquinone + NADH + (n+1) H(+)(in) = a plastoquinol + NAD(+) + n H(+)(out). It catalyses the reaction a plastoquinone + NADPH + (n+1) H(+)(in) = a plastoquinol + NADP(+) + n H(+)(out). Its function is as follows. NDH-1 shuttles electrons from an unknown electron donor, via FMN and iron-sulfur (Fe-S) centers, to quinones in the respiratory and/or the photosynthetic chain. The immediate electron acceptor for the enzyme in this species is believed to be plastoquinone. Couples the redox reaction to proton translocation, and thus conserves the redox energy in a proton gradient. Cyanobacterial NDH-1 also plays a role in inorganic carbon-concentration. In Synechococcus sp. (strain CC9902), this protein is NAD(P)H-quinone oxidoreductase subunit J.